The chain runs to 335 residues: ATP-dependent 6-phosphofructokinase (335 aa).

Gly11 is a binding site for ATP. Arg21–Arg25 provides a ligand contact to ADP. Residues Arg72–Tyr73 and Gly102–Ser105 contribute to the ATP site. Residue Asp103 participates in Mg(2+) binding. Thr125–Asp127 serves as a coordination point for substrate. The active-site Proton acceptor is Asp127. Arg154 contributes to the ADP binding site. Residues Arg162 and Met169–Arg171 each bind substrate. Residues Gly185–Asp187 and Lys213–His215 each bind ADP. Residues Glu222, Arg244, and His250 to Arg253 contribute to the substrate site.

This sequence belongs to the phosphofructokinase type A (PFKA) family. ATP-dependent PFK group I subfamily. Prokaryotic clade 'B1' sub-subfamily. In terms of assembly, homotetramer. Mg(2+) serves as cofactor.

The protein resides in the cytoplasm. The catalysed reaction is beta-D-fructose 6-phosphate + ATP = beta-D-fructose 1,6-bisphosphate + ADP + H(+). It participates in carbohydrate degradation; glycolysis; D-glyceraldehyde 3-phosphate and glycerone phosphate from D-glucose: step 3/4. Its activity is regulated as follows. Allosterically activated by ADP and other diphosphonucleosides, and allosterically inhibited by phosphoenolpyruvate. Catalyzes the phosphorylation of D-fructose 6-phosphate to fructose 1,6-bisphosphate by ATP, the first committing step of glycolysis. The sequence is that of ATP-dependent 6-phosphofructokinase from Streptococcus pneumoniae (strain ATCC BAA-255 / R6).